The sequence spans 213 residues: uncharacterized protein (213 aa).

This is an uncharacterized protein from Acanthamoeba polyphaga (Amoeba).